The following is a 72-amino-acid chain: Disintegrin batroxostatin (72 aa).

Residues 1-72 (EAGEECDCGA…SADCPRNRFY (72 aa)) enclose the Disintegrin domain. 6 cysteine pairs are disulfide-bonded: cysteine 6-cysteine 21, cysteine 8-cysteine 16, cysteine 15-cysteine 38, cysteine 29-cysteine 35, cysteine 34-cysteine 59, and cysteine 47-cysteine 66. The short motif at 51–53 (RGD) is the Cell attachment site element. A disordered region spans residues 52–72 (GDNPDDRCTGQSADCPRNRFY).

This sequence belongs to the venom metalloproteinase (M12B) family. P-II subfamily. P-IIa sub-subfamily. In terms of assembly, monomer. In terms of tissue distribution, expressed by the venom gland.

The protein resides in the secreted. In terms of biological role, inhibits fibrinogen interaction with platelets. Acts by binding to the glycoprotein IIb-IIIa receptor (ITGA2B/ITGB3) on the platelet surface and inhibits aggregation induced by ADP, thrombin, platelet-activating factor and collagen. Also inhibits T24 and SK-Mel-28 cell adhesion to fibronectin with IC(50) of 4.4 uM and 33 nM, respectively. This Bothrops atrox (Barba amarilla) protein is Disintegrin batroxostatin.